A 1640-amino-acid chain; its full sequence is Basal body protein 10 (1640 aa).

The segment at 11 to 64 is homodimerization; sequence VLRRKLEALGYSDPLEPASLQLVQKLVEDLVHTTDSYTAVKQQCAKQAQEIAAF. Residues 93–148 are a coiled coil; the sequence is AERHEREAREHYTAVKRLEDTIAELSYWKHAAAEKLASADKENAGLRKRCEELAKL. Positions 154–185 are disordered; sequence SGAATPQSVAPKISSRSPIRVAPPPSPPRPRQ. Positions 174–183 are enriched in pro residues; that stretch reads VAPPPSPPRP. 10 coiled-coil regions span residues 191-232, 260-332, 370-411, 461-722, 758-960, 1010-1030, 1059-1086, 1129-1282, 1323-1494, and 1523-1557; these read LQAA…RDVE, ILQL…LQDT, VERL…AQSR, FAAL…AEAD, ARQM…AQAA, GEAL…LVRE, RASA…LAAE, INQY…LQAS, AKDQ…AERD, and AELA…TRAT. Low complexity predominate over residues 1592 to 1618; the sequence is GQGQVQGPAGTAPAAAAGAPGPQPGQA. Residues 1592 to 1640 are disordered; it reads GQGQVQGPAGTAPAAAAGAPGPQPGQAQAGGFGGAHGGGSISLSGGPRR. Residues 1619–1631 are compositionally biased toward gly residues; that stretch reads QAGGFGGAHGGGS.

It belongs to the CEP135/TSGA10 family. In terms of assembly, homodimer.

It localises to the cytoplasm. The protein localises to the cytoskeleton. Its subcellular location is the microtubule organizing center. It is found in the centrosome. The protein resides in the centriole. Microtubule-binding protein essential for cytoskeletal organization (e.g. rootlet microtubule bundles) and flagellar basal body/centriole assembly. This Chlamydomonas reinhardtii (Chlamydomonas smithii) protein is Basal body protein 10.